Consider the following 355-residue polypeptide: Methylthioribose-1-phosphate isomerase (355 aa).

Residues 50–52 (RGA), arginine 93, and glutamine 198 each bind substrate. Aspartate 239 serves as the catalytic Proton donor. 249-250 (NK) contributes to the substrate binding site.

It belongs to the eIF-2B alpha/beta/delta subunits family. MtnA subfamily. In terms of assembly, homodimer.

It carries out the reaction 5-(methylsulfanyl)-alpha-D-ribose 1-phosphate = 5-(methylsulfanyl)-D-ribulose 1-phosphate. Its pathway is amino-acid biosynthesis; L-methionine biosynthesis via salvage pathway; L-methionine from S-methyl-5-thio-alpha-D-ribose 1-phosphate: step 1/6. Catalyzes the interconversion of methylthioribose-1-phosphate (MTR-1-P) into methylthioribulose-1-phosphate (MTRu-1-P). This chain is Methylthioribose-1-phosphate isomerase, found in Geobacillus thermodenitrificans (strain NG80-2).